A 780-amino-acid polypeptide reads, in one-letter code: Kojibiose phosphorylase (780 aa).

354–355 (WD) is a substrate binding site. Catalysis depends on glutamate 496, which acts as the Proton donor. Residue 608–609 (KQ) participates in substrate binding.

Belongs to the glycosyl hydrolase 65 family.

It carries out the reaction kojibiose + phosphate = beta-D-glucose 1-phosphate + D-glucose. Catalyzes the reversible phosphorolysis of kojibiose into beta-D-glucose 1-phosphate (Glc1P) and D-glucose. In the reverse direction, uses Glc1P as acceptor to produce alpha-1,2-glucans up to a degree of polymerization of 6. This Halothermothrix orenii (strain H 168 / OCM 544 / DSM 9562) protein is Kojibiose phosphorylase.